A 213-amino-acid chain; its full sequence is ATP phosphoribosyltransferase (213 aa).

It belongs to the ATP phosphoribosyltransferase family. Short subfamily. In terms of assembly, heteromultimer composed of HisG and HisZ subunits.

Its subcellular location is the cytoplasm. It catalyses the reaction 1-(5-phospho-beta-D-ribosyl)-ATP + diphosphate = 5-phospho-alpha-D-ribose 1-diphosphate + ATP. Its pathway is amino-acid biosynthesis; L-histidine biosynthesis; L-histidine from 5-phospho-alpha-D-ribose 1-diphosphate: step 1/9. Functionally, catalyzes the condensation of ATP and 5-phosphoribose 1-diphosphate to form N'-(5'-phosphoribosyl)-ATP (PR-ATP). Has a crucial role in the pathway because the rate of histidine biosynthesis seems to be controlled primarily by regulation of HisG enzymatic activity. In Crocosphaera subtropica (strain ATCC 51142 / BH68) (Cyanothece sp. (strain ATCC 51142)), this protein is ATP phosphoribosyltransferase.